The primary structure comprises 679 residues: HEAT repeat-containing protein 3 (679 aa).

Residues 1–11 are compositionally biased toward basic residues; it reads MGKSRTKRFKR. Residues 1 to 40 are disordered; it reads MGKSRTKRFKRPQFSPIESCQAEAAAASNGTGDEEDDGPA. Phosphoserine is present on serine 15. HEAT repeat units follow at residues 38-69 and 74-110; these read GPAAELLEKLQHPSAEVRECACAGLARLVQQR and DLARRDAVRRLGPLLLDSSLAVRETAAGALRNLSACG. Serine 144 is subject to Phosphoserine. Residue threonine 339 is modified to Phosphothreonine.

Belongs to the nuclear import and ribosome assembly adapter family. Component of a hexameric 5S RNP precursor complex, composed of 5S RNA, RRS1, RPF2/BXDC1, RPL5, RPL11 and HEATR3; this complex acts as a precursor for ribosome assembly.

Functionally, plays a role in ribosome biogenesis and in nuclear import of the 60S ribosomal protein L5/large ribosomal subunit protein uL18 (RPL5). Required for proper erythrocyte maturation. The protein is HEAT repeat-containing protein 3 (Heatr3) of Mus musculus (Mouse).